A 428-amino-acid polypeptide reads, in one-letter code: Enolase (428 aa).

Residue Gln162 coordinates (2R)-2-phosphoglycerate. Catalysis depends on Glu204, which acts as the Proton donor. The Mg(2+) site is built by Asp241, Glu283, and Asp310. (2R)-2-phosphoglycerate-binding residues include Lys335, Arg364, Ser365, and Lys386. Residue Lys335 is the Proton acceptor of the active site.

Belongs to the enolase family. Requires Mg(2+) as cofactor.

It localises to the cytoplasm. The protein localises to the secreted. The protein resides in the cell surface. It carries out the reaction (2R)-2-phosphoglycerate = phosphoenolpyruvate + H2O. Its pathway is carbohydrate degradation; glycolysis; pyruvate from D-glyceraldehyde 3-phosphate: step 4/5. In terms of biological role, catalyzes the reversible conversion of 2-phosphoglycerate (2-PG) into phosphoenolpyruvate (PEP). It is essential for the degradation of carbohydrates via glycolysis. The polypeptide is Enolase (Rhodococcus opacus (strain B4)).